Reading from the N-terminus, the 148-residue chain is 3-dehydroquinate dehydratase (148 aa).

Tyr23 (proton acceptor) is an active-site residue. Asn75, His81, and Asp88 together coordinate substrate. His101 (proton donor) is an active-site residue. Substrate contacts are provided by residues 102–103 and Arg112; that span reads LS.

The protein belongs to the type-II 3-dehydroquinase family. Homododecamer.

The catalysed reaction is 3-dehydroquinate = 3-dehydroshikimate + H2O. Its pathway is metabolic intermediate biosynthesis; chorismate biosynthesis; chorismate from D-erythrose 4-phosphate and phosphoenolpyruvate: step 3/7. Its function is as follows. Catalyzes a trans-dehydration via an enolate intermediate. In Xanthomonas campestris pv. campestris (strain 8004), this protein is 3-dehydroquinate dehydratase.